We begin with the raw amino-acid sequence, 1755 residues long: Transposon Ty1-GR1 Gag-Pol polyprotein (1755 aa).

The segment covering 1–16 has biased composition (low complexity); the sequence is MESQQLSQHSHISHGS. Disordered regions lie at residues 1–93, 126–173, and 352–421; these read MESQ…MMTQ, PQSQ…RPPP, and GSRN…SKST. 3 stretches are compositionally biased toward polar residues: residues 48–60, 71–93, and 127–152; these read TKANSQQTTTPAS, SPQTAQSHSPQNGPYPQQCMMTQ, and QSQFPQYPSSVGTPLSTPSPESGNTF. Low complexity predominate over residues 153–165; sequence TDSSSADSDMTST. The RNA-binding stretch occupies residues 299–401; it reads NNGIHINNKV…NSKSKTARAH (103 aa). A compositionally biased stretch (low complexity) spans 402–418; sequence NVSTSNNSPSTDNDSIS. Serine 416 carries the post-translational modification Phosphoserine. The active-site For protease activity; shared with dimeric partner is aspartate 461. The integrase-type zinc finger-like stretch occupies residues 583 to 640; sequence NVHTSESTRKYPYPFIHRMLAHANAQTIRYSLKNNTITYFNESDVDWSSAIDYQCPDC. One can recognise an Integrase catalytic domain in the interval 660–835; that stretch reads NSYEPFQYLH…AGLDISTLLP (176 aa). Mg(2+) is bound by residues aspartate 671 and aspartate 736. 3 disordered regions span residues 956–1087, 1092–1111, and 1130–1187; these read SKAV…ETEK, RSPSIDASPPENNSSHNIVP, and DLPL…DNET. Residues 960-969 show a composition bias toward low complexity; the sequence is SPTDSTPPST. The segment covering 1005–1015 has biased composition (polar residues); the sequence is STPQISNIEST. Over residues 1038–1053 the composition is skewed to basic and acidic residues; that stretch reads ESSHASKSKDFRHSDS. 2 stretches are compositionally biased toward polar residues: residues 1054–1082 and 1101–1111; these read YSENETNHTNVPISSTGGTNNKTVPQISD and PENNSSHNIVP. Positions 1178–1212 match the Bipartite nuclear localization signal motif; sequence KKRSLEDNETEIKVSRDTWNTKNMRSLEPPRSKKR. The Reverse transcriptase Ty1/copia-type domain occupies 1338-1476; sequence NNYYITQLDI…DILGLEIKYQ (139 aa). The Mg(2+) site is built by aspartate 1346, aspartate 1427, aspartate 1428, aspartate 1610, glutamate 1652, and aspartate 1685. Positions 1610–1752 constitute an RNase H Ty1/copia-type domain; that stretch reads DASYGNQPYY…IKTFKLLTNK (143 aa).

The capsid protein forms a homotrimer, from which the VLPs are assembled. The protease is a homodimer, whose active site consists of two apposed aspartic acid residues. Initially, virus-like particles (VLPs) are composed of the structural unprocessed proteins Gag and Gag-Pol, and also contain the host initiator methionine tRNA (tRNA(i)-Met) which serves as a primer for minus-strand DNA synthesis, and a dimer of genomic Ty RNA. Processing of the polyproteins occurs within the particle and proceeds by an ordered pathway, called maturation. First, the protease (PR) is released by autocatalytic cleavage of the Gag-Pol polyprotein yielding capsid protein p45 and a Pol-p154 precursor protein. This cleavage is a prerequisite for subsequent processing of Pol-p154 at the remaining sites to release the mature structural and catalytic proteins. Maturation takes place prior to the RT reaction and is required to produce transposition-competent VLPs.

Its subcellular location is the cytoplasm. The protein localises to the nucleus. It catalyses the reaction DNA(n) + a 2'-deoxyribonucleoside 5'-triphosphate = DNA(n+1) + diphosphate. The enzyme catalyses Endonucleolytic cleavage to 5'-phosphomonoester.. Its function is as follows. Capsid protein (CA) is the structural component of the virus-like particle (VLP), forming the shell that encapsulates the retrotransposons dimeric RNA genome. The particles are assembled from trimer-clustered units and there are holes in the capsid shells that allow for the diffusion of macromolecules. CA also has nucleocapsid-like chaperone activity, promoting primer tRNA(i)-Met annealing to the multipartite primer-binding site (PBS), dimerization of Ty1 RNA and initiation of reverse transcription. In terms of biological role, the aspartyl protease (PR) mediates the proteolytic cleavages of the Gag and Gag-Pol polyproteins after assembly of the VLP. Functionally, reverse transcriptase/ribonuclease H (RT) is a multifunctional enzyme that catalyzes the conversion of the retro-elements RNA genome into dsDNA within the VLP. The enzyme displays a DNA polymerase activity that can copy either DNA or RNA templates, and a ribonuclease H (RNase H) activity that cleaves the RNA strand of RNA-DNA heteroduplexes during plus-strand synthesis and hydrolyzes RNA primers. The conversion leads to a linear dsDNA copy of the retrotransposon that includes long terminal repeats (LTRs) at both ends. Integrase (IN) targets the VLP to the nucleus, where a subparticle preintegration complex (PIC) containing at least integrase and the newly synthesized dsDNA copy of the retrotransposon must transit the nuclear membrane. Once in the nucleus, integrase performs the integration of the dsDNA into the host genome. The sequence is that of Transposon Ty1-GR1 Gag-Pol polyprotein (TY1B-GR1) from Saccharomyces cerevisiae (strain ATCC 204508 / S288c) (Baker's yeast).